A 247-amino-acid chain; its full sequence is E3 ubiquitin-protein ligase RNF182 (247 aa).

An RING-type zinc finger spans residues 20 to 68; sequence CKICYNRYNLKQRKPKVLECCHRVCAKCLYKIIDFGDSPQGVIVCPFCR. 2 consecutive transmembrane segments (helical) span residues 184–204 and 211–231; these read VLVWLLGLLYFSSLPLGIYLL and LGVVFVSLVPSSLVILMVYGF.

As to quaternary structure, interacts with ATP6V0C.

The protein resides in the membrane. It is found in the cytoplasm. The catalysed reaction is S-ubiquitinyl-[E2 ubiquitin-conjugating enzyme]-L-cysteine + [acceptor protein]-L-lysine = [E2 ubiquitin-conjugating enzyme]-L-cysteine + N(6)-ubiquitinyl-[acceptor protein]-L-lysine.. Its pathway is protein modification; protein ubiquitination. Functionally, E3 ubiquitin-protein ligase that mediates the ubiquitination of ATP6V0C and targets it to degradation via the ubiquitin-proteasome pathway. Also plays a role in the inhibition of TLR-triggered innate immune response by mediating 'Lys'-48-linked ubiquitination and subsequent degradation of NF-kappa-B component RELA. The sequence is that of E3 ubiquitin-protein ligase RNF182 (RNF182) from Ailuropoda melanoleuca (Giant panda).